A 156-amino-acid polypeptide reads, in one-letter code: MAPKAKKEAPAPPKVEAKAKALKAKKAVLKGVHSHKKKKIRTSPTFRRPKTLRLRRQPKYPRKSAPRRNKLDHYAIIKFPLTTESAMKKIEDNNTLVFIVDVKANKHQIKQAVKKLYDIDVAKVNTLIRPDGEKKAYVRLAPDYDALDVANKIGII.

Over residues 1 to 19 (MAPKAKKEAPAPPKVEAKA) the composition is skewed to basic and acidic residues. The tract at residues 1 to 67 (MAPKAKKEAP…PKYPRKSAPR (67 aa)) is disordered. Alanine 2 is subject to N,N,N-trimethylalanine. Lysine 14 participates in a covalent cross-link: Glycyl lysine isopeptide (Lys-Gly) (interchain with G-Cter in SUMO2). Positions 20–67 (KALKAKKAVLKGVHSHKKKKIRTSPTFRRPKTLRLRRQPKYPRKSAPR) are enriched in basic residues. The tract at residues 32 to 74 (VHSHKKKKIRTSPTFRRPKTLRLRRQPKYPRKSAPRRNKLDHY) is beta-like import receptor binding (BIB) domain. Arginine 41 bears the Citrulline mark. Position 43 is a phosphoserine (serine 43). A Phosphothreonine modification is found at threonine 45. The residue at position 70 (lysine 70) is an N6-acetyllysine.

This sequence belongs to the universal ribosomal protein uL23 family. As to quaternary structure, component of the large ribosomal subunit. Interacts with LYAR and GNL2. Interacts with MDM2; this interaction may promote MDM2-mediated p53/TP53 polyubiquitination. Directly interacts (via BIB domain) with IPO5, IPO7, KPNB1 and TNPO1; these interactions are involved in RPL23A nuclear import for the assembly of ribosomal subunits. Interacts with IPO8. N-terminus is methylated by METTL11A/NTM1. In terms of processing, citrullinated by PADI4.

The protein localises to the cytoplasm. It is found in the nucleus. Its function is as follows. Component of the large ribosomal subunit. The ribosome is a large ribonucleoprotein complex responsible for the synthesis of proteins in the cell. Binds a specific region on the 26S rRNA. May promote p53/TP53 degradation possibly through the stimulation of MDM2-mediated TP53 polyubiquitination. In Oryctolagus cuniculus (Rabbit), this protein is Large ribosomal subunit protein uL23 (RPL23A).